A 452-amino-acid polypeptide reads, in one-letter code: UDP-N-acetylmuramoyl-tripeptide--D-alanyl-D-alanine ligase (452 aa).

113 to 119 (GSNGKTT) lines the ATP pocket.

Belongs to the MurCDEF family. MurF subfamily.

The protein resides in the cytoplasm. The catalysed reaction is UDP-N-acetyl-alpha-D-muramoyl-L-alanyl-gamma-D-glutamyl-L-lysine + D-alanyl-D-alanine + ATP = UDP-N-acetyl-alpha-D-muramoyl-L-alanyl-gamma-D-glutamyl-L-lysyl-D-alanyl-D-alanine + ADP + phosphate + H(+). It participates in cell wall biogenesis; peptidoglycan biosynthesis. In terms of biological role, involved in cell wall formation. Catalyzes the final step in the synthesis of UDP-N-acetylmuramoyl-pentapeptide, the precursor of murein. Catalyzes the addition of D-alanyl-D-alanine to UDP-MurNAc-L-alanyl-gamma-D-glutamyl-L-lysine. In vitro, can also use the mesodiaminopimelic acid-containing form of UDP-MurNAc-tripeptide, with the same efficiency, revealing that the discrimination for the amino acid residue at the third position of the peptide in the peptidoglycans is entirely supported by MurE. The chain is UDP-N-acetylmuramoyl-tripeptide--D-alanyl-D-alanine ligase from Staphylococcus aureus (strain NCTC 8325 / PS 47).